Consider the following 793-residue polypeptide: Lon protease 1 (793 aa).

Positions 8 to 202 (VPVIPLKNSV…KLLDRLQELK (195 aa)) constitute a Lon N-terminal domain. Position 354 to 361 (354 to 361 (GPPGVGKT)) interacts with ATP. Residues 590–770 (LLPPGVVTGL…NEVLKITLGV (181 aa)) form the Lon proteolytic domain. Residues Ser-676 and Lys-719 contribute to the active site.

It belongs to the peptidase S16 family. As to quaternary structure, homohexamer. Organized in a ring with a central cavity.

Its subcellular location is the cytoplasm. The catalysed reaction is Hydrolysis of proteins in presence of ATP.. ATP-dependent serine protease that mediates the selective degradation of mutant and abnormal proteins as well as certain short-lived regulatory proteins. Required for cellular homeostasis and for survival from DNA damage and developmental changes induced by stress. Degrades polypeptides processively to yield small peptide fragments that are 5 to 10 amino acids long. Binds to DNA in a double-stranded, site-specific manner. This Bdellovibrio bacteriovorus (strain ATCC 15356 / DSM 50701 / NCIMB 9529 / HD100) protein is Lon protease 1.